We begin with the raw amino-acid sequence, 179 residues long: Adenine phosphoribosyltransferase (179 aa).

It belongs to the purine/pyrimidine phosphoribosyltransferase family. In terms of assembly, homodimer.

It localises to the cytoplasm. The enzyme catalyses AMP + diphosphate = 5-phospho-alpha-D-ribose 1-diphosphate + adenine. Its pathway is purine metabolism; AMP biosynthesis via salvage pathway; AMP from adenine: step 1/1. Catalyzes a salvage reaction resulting in the formation of AMP, that is energically less costly than de novo synthesis. The polypeptide is Adenine phosphoribosyltransferase (Histophilus somni (strain 129Pt) (Haemophilus somnus)).